The sequence spans 154 residues: MFNIVLFEPEIPPNTGNIIRVCANTGCRLHLIEPLGFELDDKRLRRAGLDYGEWQSVVTHANWDAFIKQQAPERLWALSTKGTKFHHEVSIGEGDYLVFGPETRGLPMEILEYITFDNVLRIPMLPNSRSMNLSNAASVMVYEAWRQLGFAGSK.

The S-adenosyl-L-methionine site is built by leucine 78, glycine 100, isoleucine 122, and serine 130.

It belongs to the class IV-like SAM-binding methyltransferase superfamily. RNA methyltransferase TrmH family. TrmL subfamily. Homodimer.

Its subcellular location is the cytoplasm. It catalyses the reaction cytidine(34) in tRNA + S-adenosyl-L-methionine = 2'-O-methylcytidine(34) in tRNA + S-adenosyl-L-homocysteine + H(+). It carries out the reaction 5-carboxymethylaminomethyluridine(34) in tRNA(Leu) + S-adenosyl-L-methionine = 5-carboxymethylaminomethyl-2'-O-methyluridine(34) in tRNA(Leu) + S-adenosyl-L-homocysteine + H(+). Methylates the ribose at the nucleotide 34 wobble position in the two leucyl isoacceptors tRNA(Leu)(CmAA) and tRNA(Leu)(cmnm5UmAA). Catalyzes the methyl transfer from S-adenosyl-L-methionine to the 2'-OH of the wobble nucleotide. This is tRNA (cytidine(34)-2'-O)-methyltransferase from Saccharophagus degradans (strain 2-40 / ATCC 43961 / DSM 17024).